The following is a 361-amino-acid chain: MLYLLSELSGVFSPFNVFRYITFRTGGALFTAGLFVFWFGPWIISLLRLRQGKGQPIREDGPQTHLLTKRGTPTMGGLMILAGLLVAVFLWANPRNSYVWITVVVTLGFGAIGFYDDYLKVTKQSHKGFSGKFRLGLEALIAVAACVAVAEYSAPGLAYRLAFPVFKDAIVNLGLFWIFFASFVIVGAGNAVNITDGLDGLAIVPVMIAAATFGIIAYLVGNVIYASYLQVNYVPGTGELAVVCGALIGAGLGFLWFNAPPAQIFMGDTGSLALGGLLGTVAVATKHEIVLAVVGGLFVLEIASVIIQVASFKLTGKRVFRMAPIHHHFEQKGWKEPQVVIRFWIIAVVLALLGLATLKLR.

Transmembrane regions (helical) follow at residues 27–47, 72–92, 99–119, 139–159, 169–189, 200–220, 240–260, 264–284, 289–309, and 338–358; these read GALF…ISLL, TPTM…FLWA, VWIT…DDYL, ALIA…GLAY, AIVN…VGAG, GLAI…AYLV, LAVV…FNAP, IFMG…VAVA, IVLA…IIQV, and QVVI…LATL.

It belongs to the glycosyltransferase 4 family. MraY subfamily. Requires Mg(2+) as cofactor.

The protein resides in the cell inner membrane. The catalysed reaction is UDP-N-acetyl-alpha-D-muramoyl-L-alanyl-gamma-D-glutamyl-meso-2,6-diaminopimeloyl-D-alanyl-D-alanine + di-trans,octa-cis-undecaprenyl phosphate = di-trans,octa-cis-undecaprenyl diphospho-N-acetyl-alpha-D-muramoyl-L-alanyl-D-glutamyl-meso-2,6-diaminopimeloyl-D-alanyl-D-alanine + UMP. It functions in the pathway cell wall biogenesis; peptidoglycan biosynthesis. Functionally, catalyzes the initial step of the lipid cycle reactions in the biosynthesis of the cell wall peptidoglycan: transfers peptidoglycan precursor phospho-MurNAc-pentapeptide from UDP-MurNAc-pentapeptide onto the lipid carrier undecaprenyl phosphate, yielding undecaprenyl-pyrophosphoryl-MurNAc-pentapeptide, known as lipid I. The chain is Phospho-N-acetylmuramoyl-pentapeptide-transferase from Methylobacterium sp. (strain 4-46).